Reading from the N-terminus, the 70-residue chain is Large ribosomal subunit protein uL29 (70 aa).

It belongs to the universal ribosomal protein uL29 family.

The sequence is that of Large ribosomal subunit protein uL29 (rpl29) from Methanocaldococcus jannaschii (strain ATCC 43067 / DSM 2661 / JAL-1 / JCM 10045 / NBRC 100440) (Methanococcus jannaschii).